Reading from the N-terminus, the 130-residue chain is Small ribosomal subunit protein uS9 (130 aa).

The protein belongs to the universal ribosomal protein uS9 family.

The protein is Small ribosomal subunit protein uS9 of Bordetella parapertussis (strain 12822 / ATCC BAA-587 / NCTC 13253).